A 628-amino-acid chain; its full sequence is Very-long-chain aldehyde decarbonylase GL1-2 (628 aa).

The next 5 membrane-spanning stretches (helical) occupy residues 37 to 57, 131 to 151, 191 to 211, 299 to 319, and 331 to 351; these read GAAPVGSWWLHLLLLFAARGL, GWAIALLLHVLVAEPLFYWAH, VVIGVPLAGAFLMGVGSVGLV, DFVFLAHVVDIMASMHVPFVL, and FVLLPFWPVAFGFMLLMWCCS. The region spanning 137 to 277 is the Fatty acid hydroxylase domain; the sequence is LLHVLVAEPL…MPIFDLLGGT (141 aa).

It belongs to the sterol desaturase family. In terms of assembly, homodimer.

The protein localises to the endoplasmic reticulum membrane. The catalysed reaction is a long-chain fatty aldehyde + 2 NADPH + O2 + H(+) = a long-chain alkane + formate + 2 NADP(+) + H2O. Functionally, aldehyde decarbonylase involved in the conversion of aldehydes to alkanes. Core component of a very-long-chain alkane synthesis complex. This is Very-long-chain aldehyde decarbonylase GL1-2 from Oryza sativa subsp. indica (Rice).